A 64-amino-acid polypeptide reads, in one-letter code: Large ribosomal subunit protein bL35 (64 aa).

Positions 1–15 are enriched in basic residues; that stretch reads MPKNKTHSGTAKRFR. The disordered stretch occupies residues 1-27; that stretch reads MPKNKTHSGTAKRFRVTGSGKLRREQA.

Belongs to the bacterial ribosomal protein bL35 family.

The sequence is that of Large ribosomal subunit protein bL35 from Saccharopolyspora erythraea (strain ATCC 11635 / DSM 40517 / JCM 4748 / NBRC 13426 / NCIMB 8594 / NRRL 2338).